Reading from the N-terminus, the 144-residue chain is Putative pre-16S rRNA nuclease (144 aa).

The protein belongs to the YqgF nuclease family.

It localises to the cytoplasm. In terms of biological role, could be a nuclease involved in processing of the 5'-end of pre-16S rRNA. The chain is Putative pre-16S rRNA nuclease from Oenococcus oeni (strain ATCC BAA-331 / PSU-1).